Reading from the N-terminus, the 279-residue chain is Conserved oligomeric Golgi complex subunit 7 (279 aa).

As to quaternary structure, component of the conserved oligomeric Golgi (COG or Sec34/Sec35) complex which consists of eight different proteins COG1-COG8.

Its subcellular location is the golgi apparatus membrane. Acts as a component of the peripheral membrane COG complex that is involved in intra-Golgi protein trafficking. COG is located at the cis-Golgi, and regulates tethering of retrograde intra-Golgi vesicles and possibly a number of other membrane trafficking events. The polypeptide is Conserved oligomeric Golgi complex subunit 7 (COG7) (Saccharomyces cerevisiae (strain ATCC 204508 / S288c) (Baker's yeast)).